Here is a 130-residue protein sequence, read N- to C-terminus: ATP synthase epsilon chain (130 aa).

This sequence belongs to the ATPase epsilon chain family. In terms of assembly, F-type ATPases have 2 components, CF(1) - the catalytic core - and CF(0) - the membrane proton channel. CF(1) has five subunits: alpha(3), beta(3), gamma(1), delta(1), epsilon(1). CF(0) has three main subunits: a, b and c.

Its subcellular location is the cell inner membrane. Functionally, produces ATP from ADP in the presence of a proton gradient across the membrane. The protein is ATP synthase epsilon chain of Campylobacter lari (strain RM2100 / D67 / ATCC BAA-1060).